Consider the following 135-residue polypeptide: Single-stranded DNA-binding protein RIM1, mitochondrial (135 aa).

Residues 1 to 17 (MFLRTQARFFHATTKKM) constitute a mitochondrion transit peptide. The SSB domain maps to 19-117 (FSKMSIVGRI…LVQKDINLLK (99 aa)).

As to quaternary structure, homotetramer. Interacts with PIF1.

It is found in the mitochondrion. This protein binds preferentially and cooperatively to single-stranded DNA (ssDNS). Involved in mitochondrial DNA replication. Stimulates PIF1 helicase activity. The chain is Single-stranded DNA-binding protein RIM1, mitochondrial (RIM1) from Saccharomyces cerevisiae (strain ATCC 204508 / S288c) (Baker's yeast).